Here is a 1204-residue protein sequence, read N- to C-terminus: Exportin-5 (1204 aa).

Ala2 bears the N-acetylalanine mark. The segment at 2 to 108 (AMDQVNALCE…ANGTLNILEE (107 aa)) is necessary for interaction with Ran. The residue at position 396 (Lys396) is an N6-acetyllysine. Residues 533–640 (ELLQMVLNFD…KQLLSNELLL (108 aa)) form a necessary for interaction with ILF3 region. The segment at 641-642 (TQ) is pre-miRNA binding. Ser826 is subject to Phosphoserine.

Belongs to the exportin family. Component of a nuclear export receptor complex composed of XPO5, RAN, dsRNA-binding proteins and dsRNA. Found in a nuclear export complex with XPO5, RAN, EEF1A1, and aminoacylated tRNA. Found in a nuclear export complex with XPO5, RAN, ILF3 and dsRNA. Found in a nuclear export complex with XPO5, RAN and pre-miRNA. Found in a nuclear export complex with XPO5, RAN, ILF3 and minihelix VA1 dsRNA. Found in a nuclear export complex with XPO5, RAN, ILF3, ZNF346 and dsRNA. Interacts with EEF1A1, ILF3, NUP153, NUP214 and ZNF346. Interacts with RAN and cargo proteins in a GTP-dependent manner. Interacts with isoform 5 of ADAR/ADAR1 (via DRBM domains). Interacts with SMAD4; mediates nuclear export of SMAD4. Interacts with RAN (GTP-bound form). Expressed in heart, brain, placenta, lung, skeletal muscle, kidney and pancreas.

Its subcellular location is the nucleus. The protein resides in the cytoplasm. Its function is as follows. Mediates the nuclear export of proteins bearing a double-stranded RNA binding domain (dsRBD) and double-stranded RNAs (cargos). XPO5 in the nucleus binds cooperatively to the RNA and to the GTPase Ran in its active GTP-bound form. Proteins containing dsRBDs can associate with this trimeric complex through the RNA. Docking of this complex to the nuclear pore complex (NPC) is mediated through binding to nucleoporins. Upon transit of a nuclear export complex into the cytoplasm, hydrolysis of Ran-GTP to Ran-GDP (induced by RANBP1 and RANGAP1, respectively) cause disassembly of the complex and release of the cargo from the export receptor. XPO5 then returns to the nuclear compartment by diffusion through the nuclear pore complex, to mediate another round of transport. The directionality of nuclear export is thought to be conferred by an asymmetric distribution of the GTP- and GDP-bound forms of Ran between the cytoplasm and nucleus. Overexpression may in some circumstances enhance RNA-mediated gene silencing (RNAi). Mediates nuclear export of isoform 5 of ADAR/ADAR1 in a RanGTP-dependent manner. Mediates the nuclear export of micro-RNA precursors, which form short hairpins. Also mediates the nuclear export of synthetic short hairpin RNAs used for RNA interference. In some circumstances can also mediate the nuclear export of deacylated and aminoacylated tRNAs. Specifically recognizes dsRNAs that lack a 5'-overhang in a sequence-independent manner, have only a short 3'-overhang, and that have a double-stranded length of at least 15 base-pairs. Binding is dependent on Ran-GTP. In terms of biological role, (Microbial infection) Mediates the nuclear export of adenovirus VA1 dsRNA. The polypeptide is Exportin-5 (XPO5) (Homo sapiens (Human)).